Here is an 85-residue protein sequence, read N- to C-terminus: Large ribosomal subunit protein bL31B (85 aa).

It belongs to the bacterial ribosomal protein bL31 family. Type B subfamily. In terms of assembly, part of the 50S ribosomal subunit.

The sequence is that of Large ribosomal subunit protein bL31B from Clavibacter sepedonicus (Clavibacter michiganensis subsp. sepedonicus).